The following is a 304-amino-acid chain: Sulfate adenylyltransferase subunit 2 1 (304 aa).

Belongs to the PAPS reductase family. CysD subfamily. As to quaternary structure, heterodimer composed of CysD, the smaller subunit, and CysN.

The enzyme catalyses sulfate + ATP + H(+) = adenosine 5'-phosphosulfate + diphosphate. It participates in sulfur metabolism; hydrogen sulfide biosynthesis; sulfite from sulfate: step 1/3. In terms of biological role, with CysN forms the ATP sulfurylase (ATPS) that catalyzes the adenylation of sulfate producing adenosine 5'-phosphosulfate (APS) and diphosphate, the first enzymatic step in sulfur assimilation pathway. APS synthesis involves the formation of a high-energy phosphoric-sulfuric acid anhydride bond driven by GTP hydrolysis by CysN coupled to ATP hydrolysis by CysD. The polypeptide is Sulfate adenylyltransferase subunit 2 1 (Marinobacter nauticus (strain ATCC 700491 / DSM 11845 / VT8) (Marinobacter aquaeolei)).